The sequence spans 196 residues: HTH-type transcriptional regulator UidR (196 aa).

Residues 10–70 (QPTRTRILNA…AIILQDQERA (61 aa)) enclose the HTH tetR-type domain. Residues 33–52 (SMKAICKSCAISPGTLYHHF) constitute a DNA-binding region (H-T-H motif).

Repressor for the uidRABC (gusRABC) operon. The protein is HTH-type transcriptional regulator UidR (uidR) of Escherichia coli O157:H7.